The chain runs to 205 residues: Cytochrome c biogenesis ATP-binding export protein CcmA (205 aa).

Residues 2 to 204 enclose the ABC transporter domain; the sequence is LEVSNLTAIR…SPKLRKIKLG (203 aa). 34 to 41 provides a ligand contact to ATP; the sequence is GRNGTGKT.

Belongs to the ABC transporter superfamily. CcmA exporter (TC 3.A.1.107) family. In terms of assembly, the complex is composed of two ATP-binding proteins (CcmA) and two transmembrane proteins (CcmB).

The protein resides in the cell inner membrane. It catalyses the reaction heme b(in) + ATP + H2O = heme b(out) + ADP + phosphate + H(+). In terms of biological role, part of the ABC transporter complex CcmAB involved in the biogenesis of c-type cytochromes; once thought to export heme, this seems not to be the case, but its exact role is uncertain. Responsible for energy coupling to the transport system. This is Cytochrome c biogenesis ATP-binding export protein CcmA from Vibrio vulnificus (strain CMCP6).